The following is a 78-amino-acid chain: cAMP-dependent protein kinase inhibitor beta (78 aa).

The span at 1–10 (MRTDSSKMTD) shows a compositional bias: basic and acidic residues. The tract at residues 1-78 (MRTDSSKMTD…QLEKPQNEEK (78 aa)) is disordered. The span at 33–42 (IQSSAATDGT) shows a compositional bias: polar residues. Over residues 53 to 78 (SVKEDAKEKDEKTTQDQLEKPQNEEK) the composition is skewed to basic and acidic residues.

This sequence belongs to the PKI family.

Functionally, extremely potent competitive inhibitor of cAMP-dependent protein kinase activity, this protein interacts with the catalytic subunit of the enzyme after the cAMP-induced dissociation of its regulatory chains. This Homo sapiens (Human) protein is cAMP-dependent protein kinase inhibitor beta (PKIB).